The chain runs to 860 residues: Leucine--tRNA ligase (860 aa).

A 'HIGH' region motif is present at residues 42–52 (PYPSGRLHMGH). A 'KMSKS' region motif is present at residues 619 to 623 (KMSKS). Lys622 provides a ligand contact to ATP.

The protein belongs to the class-I aminoacyl-tRNA synthetase family.

The protein localises to the cytoplasm. It catalyses the reaction tRNA(Leu) + L-leucine + ATP = L-leucyl-tRNA(Leu) + AMP + diphosphate. This chain is Leucine--tRNA ligase, found in Escherichia coli O7:K1 (strain IAI39 / ExPEC).